A 208-amino-acid polypeptide reads, in one-letter code: Uracil phosphoribosyltransferase (208 aa).

5-phospho-alpha-D-ribose 1-diphosphate contacts are provided by residues Arg78, Arg103, and 130–138 (DPMLATGVS). Uracil-binding positions include Ile193 and 198–200 (GDA). 5-phospho-alpha-D-ribose 1-diphosphate is bound at residue Asp199.

This sequence belongs to the UPRTase family. Mg(2+) is required as a cofactor.

It carries out the reaction UMP + diphosphate = 5-phospho-alpha-D-ribose 1-diphosphate + uracil. The protein operates within pyrimidine metabolism; UMP biosynthesis via salvage pathway; UMP from uracil: step 1/1. With respect to regulation, allosterically activated by GTP. Its function is as follows. Catalyzes the conversion of uracil and 5-phospho-alpha-D-ribose 1-diphosphate (PRPP) to UMP and diphosphate. In Thermosipho africanus (strain TCF52B), this protein is Uracil phosphoribosyltransferase.